Consider the following 119-residue polypeptide: Small ribosomal subunit protein bS16 (119 aa).

A compositionally biased stretch (basic and acidic residues) spans 89–103; sequence TTKSTKEKAATDKKA. A disordered region spans residues 89–119; that stretch reads TTKSTKEKAATDKKAKVTKKPKTKTTTDVKK.

Belongs to the bacterial ribosomal protein bS16 family.

The chain is Small ribosomal subunit protein bS16 from Spiroplasma kunkelii.